Reading from the N-terminus, the 197-residue chain is NADH-quinone oxidoreductase subunit C (197 aa).

Belongs to the complex I 30 kDa subunit family. In terms of assembly, NDH-1 is composed of 14 different subunits. Subunits NuoB, C, D, E, F, and G constitute the peripheral sector of the complex.

The protein resides in the cell inner membrane. The catalysed reaction is a quinone + NADH + 5 H(+)(in) = a quinol + NAD(+) + 4 H(+)(out). Its function is as follows. NDH-1 shuttles electrons from NADH, via FMN and iron-sulfur (Fe-S) centers, to quinones in the respiratory chain. The immediate electron acceptor for the enzyme in this species is believed to be ubiquinone. Couples the redox reaction to proton translocation (for every two electrons transferred, four hydrogen ions are translocated across the cytoplasmic membrane), and thus conserves the redox energy in a proton gradient. This Neisseria meningitidis serogroup B (strain ATCC BAA-335 / MC58) protein is NADH-quinone oxidoreductase subunit C.